The sequence spans 266 residues: Uxu operon regulator (266 aa).

An HTH gntR-type domain is found at Asn-23 to Thr-91. The H-T-H motif DNA-binding region spans Glu-51 to Val-70.

In terms of biological role, repressor for the uxuRBA operon. The chain is Uxu operon regulator (uxuR) from Haemophilus influenzae (strain ATCC 51907 / DSM 11121 / KW20 / Rd).